A 1013-amino-acid polypeptide reads, in one-letter code: AP-2 complex subunit alpha-2 (1013 aa).

4 HEAT repeats span residues 254–289 (AMRA…VVKN), 354–391 (DIIK…VSNA), 393–430 (DIVE…DLSW), and 521–565 (TVST…CIDV). The interval 652–676 (STDPESVARSLSHPNGTLSNIDPQT) is disordered. Residues 663-675 (SHPNGTLSNIDPQ) show a composition bias toward polar residues. The GAE domain occupies 742-841 (ALCLKDSGVL…LDFSYKFGTN (100 aa)). The required for AP180 binding stretch occupies residues 760 to 1013 (GIKAEWRGHH…DPGAMLAGLL (254 aa)).

This sequence belongs to the adaptor complexes large subunit family. Adaptor protein complex 2 (AP-2) is a heterotetramer composed of two large adaptins (alpha-type and beta-type subunits), a medium adaptin (mu-type subunit) and a small adaptin (sigma-type subunit). Interacts with AP180.

The protein localises to the membrane. The protein resides in the coated pit. In terms of biological role, subunit of the adaptor protein complex 2 (AP-2). Adaptor protein complexes function in protein transport via transport vesicles in different membrane traffic pathways. Adaptor protein complexes are vesicle coat components and appear to be involved in cargo selection and vesicle formation. AP-2 is involved in clathrin-dependent endocytosis in which cargo proteins are incorporated into vesicles surrounded by clathrin (clathrin-coated vesicles, CCVs) which are destined for fusion with the early endosome. The complex binds polyphosphoinositides. The polypeptide is AP-2 complex subunit alpha-2 (ALPHAC-AD) (Arabidopsis thaliana (Mouse-ear cress)).